Reading from the N-terminus, the 87-residue chain is UPF0237 protein YjhC (87 aa).

Residues 4–76 enclose the ACT domain; that stretch reads VVTVVGADKI…EALGVNIHVQ (73 aa).

It belongs to the UPF0237 family.

This chain is UPF0237 protein YjhC (yjhC), found in Lactococcus lactis subsp. lactis (strain IL1403) (Streptococcus lactis).